The following is a 321-amino-acid chain: Transaldolase (321 aa).

Lys132 functions as the Schiff-base intermediate with substrate in the catalytic mechanism.

It belongs to the transaldolase family. Type 1 subfamily. Homodimer.

Its subcellular location is the cytoplasm. It catalyses the reaction D-sedoheptulose 7-phosphate + D-glyceraldehyde 3-phosphate = D-erythrose 4-phosphate + beta-D-fructose 6-phosphate. It functions in the pathway carbohydrate degradation; pentose phosphate pathway; D-glyceraldehyde 3-phosphate and beta-D-fructose 6-phosphate from D-ribose 5-phosphate and D-xylulose 5-phosphate (non-oxidative stage): step 2/3. Its function is as follows. Transaldolase is important for the balance of metabolites in the pentose-phosphate pathway. The protein is Transaldolase of Rhizobium rhizogenes (strain K84 / ATCC BAA-868) (Agrobacterium radiobacter).